Here is a 565-residue protein sequence, read N- to C-terminus: Liver carboxylesterase 1 (565 aa).

The signal sequence occupies residues 1-18 (MWLCALSLISLTACLSLG). Cys-87 and Cys-116 are disulfide-bonded. The Acyl-ester intermediate role is filled by Ser-221. A disulfide bridge connects residues Cys-273 and Cys-284. Residue Glu-353 is the Charge relay system of the active site. A Phosphoserine modification is found at Ser-378. A glycan (N-linked (GlcNAc...) asparagine) is linked at Asn-388. The active-site Charge relay system is His-466. Residue Asn-489 is glycosylated (N-linked (GlcNAc...) asparagine).

It belongs to the type-B carboxylesterase/lipase family. As to quaternary structure, homotrimer and homohexamer. Binds to beta-glucuronidase. In terms of tissue distribution, detected in kidney, liver and lung.

It is found in the endoplasmic reticulum lumen. The protein localises to the cytoplasm. The protein resides in the lipid droplet. It catalyses the reaction a carboxylic ester + H2O = an alcohol + a carboxylate + H(+). The enzyme catalyses cholesteryl (9Z-octadecenoate) + H2O = cholesterol + (9Z)-octadecenoate + H(+). It carries out the reaction 2-(5Z,8Z,11Z,14Z-eicosatetraenoyl)-glycerol + H2O = glycerol + (5Z,8Z,11Z,14Z)-eicosatetraenoate + H(+). The catalysed reaction is prostaglandin E2 1-glyceryl ester + H2O = prostaglandin E2 + glycerol + H(+). It catalyses the reaction a cholesterol ester + H2O = cholesterol + a fatty acid + H(+). The enzyme catalyses prostaglandin F2alpha 1-glyceryl ester + H2O = prostaglandin F2alpha + glycerol + H(+). Its function is as follows. Involved in the detoxification of xenobiotics and in the activation of ester and amide prodrugs. Hydrolyzes aromatic and aliphatic esters, but has no catalytic activity toward amides or a fatty acyl-CoA ester. Displays fatty acid ethyl ester synthase activity, catalyzing the ethyl esterification of oleic acid to ethyloleate. Converts monoacylglycerides to free fatty acids and glycerol. Hydrolyzes of 2-arachidonoylglycerol and prostaglandins. Hydrolyzes cellular cholesteryl esters to free cholesterols and promotes reverse cholesterol transport (RCT) by facilitating both the initial and final steps in the process. First of all, allows free cholesterol efflux from macrophages to extracellular cholesterol acceptors and secondly, releases free cholesterol from lipoprotein-delivered cholesteryl esters in the liver for bile acid synthesis or direct secretion into the bile. The protein is Liver carboxylesterase 1 of Mus musculus (Mouse).